The sequence spans 132 residues: UPF0719 inner membrane protein YjfL (132 aa).

Topologically, residues 1–6 (MHILDS) are periplasmic. A helical membrane pass occupies residues 7 to 27 (LLAFSAYFFIGVAMVIIFLFI). The Cytoplasmic segment spans residues 28–46 (YSKITPHNEWQLIKNNNTA). The helical transmembrane segment at 47–67 (ASLAFSGTLLGYVIPLSSAAI) threads the bilayer. Residues 68–71 (NAVS) lie on the Periplasmic side of the membrane. The helical transmembrane segment at 72-92 (IPDYFAWGGIALVIQLLVFAG) threads the bilayer. Residues 93–109 (VRLYMPALSEKIINHNT) are Cytoplasmic-facing. A helical membrane pass occupies residues 110 to 130 (AAGMFMGTAALAGGIFNAACM). Residues 131–132 (TW) lie on the Periplasmic side of the membrane.

This sequence belongs to the UPF0719 family.

It localises to the cell inner membrane. In Escherichia coli O157:H7, this protein is UPF0719 inner membrane protein YjfL (yjfL).